The chain runs to 111 residues: uncharacterized protein (111 aa).

A helical transmembrane segment spans residues 81-101; that stretch reads YFFLLFYVSFPHIFLGLFFFI.

Its subcellular location is the membrane. This is an uncharacterized protein from Schizosaccharomyces pombe (strain 972 / ATCC 24843) (Fission yeast).